The following is a 432-amino-acid chain: SVP1-like protein 2 (432 aa).

2 WD repeats span residues 223 to 263 (AHKS…LLYE) and 268 to 307 (LDRA…TSSG).

The protein belongs to the WD repeat PROPPIN family.

The protein resides in the vacuole membrane. Its subcellular location is the cytoplasmic vesicle membrane. Its function is as follows. Involved in mitochondrial or peroxisomal functions and amino acid signaling pathways. The polypeptide is SVP1-like protein 2 (HSV2) (Debaryomyces hansenii (strain ATCC 36239 / CBS 767 / BCRC 21394 / JCM 1990 / NBRC 0083 / IGC 2968) (Yeast)).